Here is a 402-residue protein sequence, read N- to C-terminus: Sorting nexin 1 (402 aa).

The segment covering Met-1–Ile-10 has biased composition (polar residues). The tract at residues Met-1 to Tyr-25 is disordered. The span at Ser-11 to Pro-24 shows a compositional bias: low complexity. Ser-16 is subject to Phosphoserine. The PX domain occupies Pro-24–Met-143. A 1,2-diacyl-sn-glycero-3-phospho-(1D-myo-inositol-3-phosphate)-binding residues include Arg-67, Lys-93, and Arg-109. One can recognise a BAR domain in the interval Leu-160 to Val-402.

This sequence belongs to the sorting nexin family. As to quaternary structure, homodimer. Heterodimer with SNX2A or SNX2B. Component of the retromer complex which consists of VPS29 (MAG1), VPS26 (VPS26A or VPS26B), VPS35 (VPS35A or VPS35B or VPS35C), VPS5/17 (SNX1 or SNX2A or SNX2B). Interacts with BLOS1 and BLOS2. In terms of tissue distribution, ubiquitously expressed.

The protein resides in the cytoplasm. Its subcellular location is the endosome membrane. It is found in the prevacuolar compartment membrane. The protein localises to the golgi apparatus. It localises to the trans-Golgi network membrane. Functionally, plays a role in vesicular protein sorting. Acts at the crossroads between the secretory and endocytic pathways. Is involved in the endosome to vacuole protein transport via its interaction with the BLOS1/2 proteins and, as component of the membrane-associated retromer complex, is also involved in endosome-to-Golgi retrograde transport. Required for the auxin-carrier protein PIN2 sorting to the lytic vacuolar pathway and the trafficking of several plasma membrane proteins. Also involved in the efficient sorting of seed storage protein globulin 12S. The protein is Sorting nexin 1 (SNX1) of Arabidopsis thaliana (Mouse-ear cress).